The following is a 288-amino-acid chain: Small ribosomal subunit protein uS2 (288 aa).

A disordered region spans residues 255–288 (ANNRDHKNNKNNSTIDNAENLKEENLVGGSNNES).

This sequence belongs to the universal ribosomal protein uS2 family.

This Ehrlichia chaffeensis (strain ATCC CRL-10679 / Arkansas) protein is Small ribosomal subunit protein uS2.